The chain runs to 347 residues: UDP-N-acetylenolpyruvoylglucosamine reductase (347 aa).

The FAD-binding PCMH-type domain occupies 24 to 195; the sequence is FDARARVAAR…VAVTFRLPKA (172 aa). R171 is a catalytic residue. S247 acts as the Proton donor in catalysis. E343 is a catalytic residue.

It belongs to the MurB family. The cofactor is FAD.

The protein resides in the cytoplasm. The catalysed reaction is UDP-N-acetyl-alpha-D-muramate + NADP(+) = UDP-N-acetyl-3-O-(1-carboxyvinyl)-alpha-D-glucosamine + NADPH + H(+). Its pathway is cell wall biogenesis; peptidoglycan biosynthesis. Its function is as follows. Cell wall formation. The sequence is that of UDP-N-acetylenolpyruvoylglucosamine reductase from Burkholderia pseudomallei (strain 668).